A 147-amino-acid polypeptide reads, in one-letter code: Protein-export protein SecB (147 aa).

This sequence belongs to the SecB family. In terms of assembly, homotetramer, a dimer of dimers. One homotetramer interacts with 1 SecA dimer.

Its subcellular location is the cytoplasm. Functionally, one of the proteins required for the normal export of preproteins out of the cell cytoplasm. It is a molecular chaperone that binds to a subset of precursor proteins, maintaining them in a translocation-competent state. It also specifically binds to its receptor SecA. This Neisseria meningitidis serogroup A / serotype 4A (strain DSM 15465 / Z2491) protein is Protein-export protein SecB.